We begin with the raw amino-acid sequence, 537 residues long: Interleukin-2 receptor subunit beta (537 aa).

The signal sequence occupies residues 1–26; it reads MATVDLSWRLPLYILLLLLATTWVSA. Topologically, residues 27–239 are extracellular; sequence AVNDCSHLKC…FRTRPADPKE (213 aa). An intrachain disulfide couples Cys-36 to Cys-46. Asn-43, Asn-55, and Asn-71 each carry an N-linked (GlcNAc...) asparagine glycan. The cysteines at positions 74 and 86 are disulfide-linked. Residues 135 to 235 enclose the Fibronectin type-III domain; it reads APHSLQVLHI…QPMAFRTRPA (101 aa). An N-linked (GlcNAc...) asparagine glycan is attached at Asn-150. The WSXWS motif motif lies at 221 to 225; sequence WSPWS. A helical transmembrane segment spans residues 240–267; it reads IFPLPWLRCLLLVLGCFFGFLSCVCVLV. At 268–537 the chain is on the cytoplasmic side; sequence KCRYLGPWLK…LQAQDSAHLI (270 aa). The Box 1 motif motif lies at 280-288; that stretch reads LKCHIPDPS. 2 disordered regions span residues 442–466 and 479–498; these read AYGN…SLAS and ELGD…QASV. Residues 487–497 show a composition bias toward polar residues; the sequence is MSTNSSGQQAS.

The protein belongs to the type I cytokine receptor family. Type 4 subfamily. As to quaternary structure, non-covalent dimer of an alpha and a beta subunit. IL2R exists in 3 different forms: a high affinity dimer, an intermediate affinity monomer (beta subunit), and a low affinity monomer (alpha subunit). The high and intermediate affinity forms also associate with a gamma subunit. Interacts with SHB upon interleukin stimulation.

The protein localises to the cell membrane. The protein resides in the cell surface. In terms of biological role, receptor for interleukin-2. This beta subunit is involved in receptor mediated endocytosis and transduces the mitogenic signals of IL2. Probably in association with IL15RA, involved in the stimulation of neutrophil phagocytosis by IL15. This is Interleukin-2 receptor subunit beta (Il2rb) from Rattus norvegicus (Rat).